The primary structure comprises 33 residues: Photosystem II reaction center protein Psb30 (33 aa).

Residues 7–27 traverse the membrane as a helical segment; sequence IQLGSLTLITLTGPLIIGIIF.

The protein belongs to the Psb30/Ycf12 family. As to quaternary structure, PSII is composed of 1 copy each of membrane proteins PsbA, PsbB, PsbC, PsbD, PsbE, PsbF, PsbH, PsbI, PsbJ, PsbK, PsbL, PsbM, PsbT, PsbY, PsbZ, Psb30/Ycf12, peripheral proteins of the oxygen-evolving complex and a large number of cofactors. It forms dimeric complexes.

The protein resides in the plastid. The protein localises to the chloroplast thylakoid membrane. Functionally, a core subunit of photosystem II (PSII), probably helps stabilize the reaction center. The chain is Photosystem II reaction center protein Psb30 from Euglena gracilis.